Consider the following 376-residue polypeptide: Chaperone protein DnaJ (376 aa).

Residues 5–70 enclose the J domain; it reads DYYEILGVSK…QKRAAYDQYG (66 aa). The CR-type zinc finger occupies 131–209; sequence GVTKEIRIPT…CHGHGRVERS (79 aa). Positions 144, 147, 161, 164, 183, 186, 197, and 200 each coordinate Zn(2+). CXXCXGXG motif repeat units lie at residues 144-151, 161-168, 183-190, and 197-204; these read CDVCHGSG, CPTCHGSG, CPHCQGRG, and CNKCHGHG.

It belongs to the DnaJ family. In terms of assembly, homodimer. It depends on Zn(2+) as a cofactor.

Its subcellular location is the cytoplasm. In terms of biological role, participates actively in the response to hyperosmotic and heat shock by preventing the aggregation of stress-denatured proteins and by disaggregating proteins, also in an autonomous, DnaK-independent fashion. Unfolded proteins bind initially to DnaJ; upon interaction with the DnaJ-bound protein, DnaK hydrolyzes its bound ATP, resulting in the formation of a stable complex. GrpE releases ADP from DnaK; ATP binding to DnaK triggers the release of the substrate protein, thus completing the reaction cycle. Several rounds of ATP-dependent interactions between DnaJ, DnaK and GrpE are required for fully efficient folding. Also involved, together with DnaK and GrpE, in the DNA replication of plasmids through activation of initiation proteins. This Escherichia coli (strain K12 / DH10B) protein is Chaperone protein DnaJ.